Here is an 87-residue protein sequence, read N- to C-terminus: Toxin ICK-42 (87 aa).

A signal peptide spans 1–19 (MKPIVYMLLFCAFTVVILG). Cystine bridges form between cysteine 40/cysteine 54, cysteine 40/cysteine 77, cysteine 53/cysteine 66, and cysteine 80/cysteine 87.

Belongs to the neurotoxin 27 (Jztx-72) family. ICK-41 subfamily. In terms of tissue distribution, expressed by the venom gland.

It localises to the secreted. Functionally, probable neurotoxin with ion channel impairing activity. This chain is Toxin ICK-42, found in Trittame loki (Brush-footed trapdoor spider).